Reading from the N-terminus, the 93-residue chain is Large ribosomal subunit protein uL23cz/uL23cy (93 aa).

It belongs to the universal ribosomal protein uL23 family. Part of the 50S ribosomal subunit.

The protein localises to the plastid. It is found in the chloroplast. Its function is as follows. Binds to 23S rRNA. The chain is Large ribosomal subunit protein uL23cz/uL23cy (rpl23-A) from Lactuca sativa (Garden lettuce).